A 288-amino-acid polypeptide reads, in one-letter code: Phosphatidylserine decarboxylase proenzyme (288 aa).

Active-site charge relay system; for autoendoproteolytic cleavage activity residues include aspartate 89, histidine 146, and serine 252. Catalysis depends on serine 252, which acts as the Schiff-base intermediate with substrate; via pyruvic acid; for decarboxylase activity. The residue at position 252 (serine 252) is a Pyruvic acid (Ser); by autocatalysis.

It belongs to the phosphatidylserine decarboxylase family. PSD-B subfamily. Prokaryotic type I sub-subfamily. Heterodimer of a large membrane-associated beta subunit and a small pyruvoyl-containing alpha subunit. Requires pyruvate as cofactor. Is synthesized initially as an inactive proenzyme. Formation of the active enzyme involves a self-maturation process in which the active site pyruvoyl group is generated from an internal serine residue via an autocatalytic post-translational modification. Two non-identical subunits are generated from the proenzyme in this reaction, and the pyruvate is formed at the N-terminus of the alpha chain, which is derived from the carboxyl end of the proenzyme. The autoendoproteolytic cleavage occurs by a canonical serine protease mechanism, in which the side chain hydroxyl group of the serine supplies its oxygen atom to form the C-terminus of the beta chain, while the remainder of the serine residue undergoes an oxidative deamination to produce ammonia and the pyruvoyl prosthetic group on the alpha chain. During this reaction, the Ser that is part of the protease active site of the proenzyme becomes the pyruvoyl prosthetic group, which constitutes an essential element of the active site of the mature decarboxylase.

It localises to the cell membrane. The catalysed reaction is a 1,2-diacyl-sn-glycero-3-phospho-L-serine + H(+) = a 1,2-diacyl-sn-glycero-3-phosphoethanolamine + CO2. Its pathway is phospholipid metabolism; phosphatidylethanolamine biosynthesis; phosphatidylethanolamine from CDP-diacylglycerol: step 2/2. Its function is as follows. Catalyzes the formation of phosphatidylethanolamine (PtdEtn) from phosphatidylserine (PtdSer). This chain is Phosphatidylserine decarboxylase proenzyme, found in Shewanella frigidimarina (strain NCIMB 400).